The chain runs to 271 residues: Putative hydro-lyase Mrad2831_3350 (271 aa).

The protein belongs to the D-glutamate cyclase family.

The chain is Putative hydro-lyase Mrad2831_3350 from Methylobacterium radiotolerans (strain ATCC 27329 / DSM 1819 / JCM 2831 / NBRC 15690 / NCIMB 10815 / 0-1).